The sequence spans 173 residues: Ribosome maturation factor RimM (173 aa).

The PRC barrel domain occupies 98-170 (EGEFYWCDLI…IMTVSPTEGL (73 aa)).

It belongs to the RimM family. In terms of assembly, binds ribosomal protein uS19.

The protein localises to the cytoplasm. In terms of biological role, an accessory protein needed during the final step in the assembly of 30S ribosomal subunit, possibly for assembly of the head region. Essential for efficient processing of 16S rRNA. May be needed both before and after RbfA during the maturation of 16S rRNA. It has affinity for free ribosomal 30S subunits but not for 70S ribosomes. The sequence is that of Ribosome maturation factor RimM from Geobacter metallireducens (strain ATCC 53774 / DSM 7210 / GS-15).